A 193-amino-acid polypeptide reads, in one-letter code: AP-3 complex subunit sigma-2 (193 aa).

The protein belongs to the adaptor complexes small subunit family. Adaptor protein complex 3 (AP-3) is a heterotetramer composed of two large adaptins (delta-type subunit AP3D1 and beta-type subunit AP3B1 or AP3B2), a medium adaptin (mu-type subunit AP3M1 or AP3M2) and a small adaptin (sigma-type subunit APS1 or AP3S2). Interacts with AGAP1. AP-3 associates with the BLOC-1 complex.

Its subcellular location is the golgi apparatus. It is found in the cytoplasmic vesicle membrane. Part of the AP-3 complex, an adaptor-related complex which is not clathrin-associated. The complex is associated with the Golgi region as well as more peripheral structures. It facilitates the budding of vesicles from the Golgi membrane and may be directly involved in trafficking to lysosomes. In concert with the BLOC-1 complex, AP-3 is required to target cargos into vesicles assembled at cell bodies for delivery into neurites and nerve terminals. The polypeptide is AP-3 complex subunit sigma-2 (AP3S2) (Bos taurus (Bovine)).